The sequence spans 190 residues: Ribosome maturation factor RimM (190 aa).

A PRC barrel domain is found at 102 to 190 (EDEYYWIDLV…RIDSDWPLED (89 aa)).

This sequence belongs to the RimM family. In terms of assembly, binds ribosomal protein uS19.

Its subcellular location is the cytoplasm. In terms of biological role, an accessory protein needed during the final step in the assembly of 30S ribosomal subunit, possibly for assembly of the head region. Essential for efficient processing of 16S rRNA. May be needed both before and after RbfA during the maturation of 16S rRNA. It has affinity for free ribosomal 30S subunits but not for 70S ribosomes. In Bordetella avium (strain 197N), this protein is Ribosome maturation factor RimM.